Reading from the N-terminus, the 174-residue chain is ATP synthase subunit b, organellar chromatophore (174 aa).

Residues 26 to 46 (LINLIIVIGVLFTFLRGFLGE) form a helical membrane-spanning segment.

Belongs to the ATPase B chain family. F-type ATPases have 2 components, F(1) - the catalytic core - and F(0) - the membrane proton channel. F(1) has five subunits: alpha(3), beta(3), gamma(1), delta(1), epsilon(1). F(0) has four main subunits: a(1), b(1), b'(1) and c(10-14). The alpha and beta chains form an alternating ring which encloses part of the gamma chain. F(1) is attached to F(0) by a central stalk formed by the gamma and epsilon chains, while a peripheral stalk is formed by the delta, b and b' chains.

The protein localises to the plastid. It is found in the organellar chromatophore thylakoid membrane. Functionally, f(1)F(0) ATP synthase produces ATP from ADP in the presence of a proton or sodium gradient. F-type ATPases consist of two structural domains, F(1) containing the extramembraneous catalytic core and F(0) containing the membrane proton channel, linked together by a central stalk and a peripheral stalk. During catalysis, ATP synthesis in the catalytic domain of F(1) is coupled via a rotary mechanism of the central stalk subunits to proton translocation. Component of the F(0) channel, it forms part of the peripheral stalk, linking F(1) to F(0). This chain is ATP synthase subunit b, organellar chromatophore, found in Paulinella chromatophora.